We begin with the raw amino-acid sequence, 2514 residues long: Probable polyketide synthase 8/35 (2514 aa).

One can recognise a Ketosynthase family 3 (KS3) domain in the interval 11-442; that stretch reads DKGVAIVGVG…GSNCCLLISE (432 aa). Catalysis depends on for beta-ketoacyl synthase activity residues Cys181, His323, and His362. The interval 635-668 is acyl/malonyl transferase; that stretch reads GVNPSFILGHSLGEISAAYCSGMIDLDTFCYTVY. The active-site For acyl/malonyl transferase activity is the Ser645. Residues 925–1047 form an N-terminal hotdog fold region; it reads IDHLGLSNSY…ANFQLLDHGN (123 aa). A PKS/mFAS DH domain is found at 925 to 1209; it reads IDHLGLSNSY…FKSLIPIKHS (285 aa). The active-site Proton acceptor; for dehydratase activity is the His959. Positions 1064–1209 are C-terminal hotdog fold; the sequence is NLSKLTKNEL…FKSLIPIKHS (146 aa). Asp1122 functions as the Proton donor; for dehydratase activity in the catalytic mechanism. A Carrier domain is found at 2431-2508; that stretch reads IGNKNIDELF…ISIKMILNSL (78 aa). Ser2468 bears the O-(pantetheine 4'-phosphoryl)serine mark.

Pantetheine 4'-phosphate is required as a cofactor.

Its function is as follows. Probable polyketide synthase. The protein is Probable polyketide synthase 8/35 (pks8) of Dictyostelium discoideum (Social amoeba).